Consider the following 301-residue polypeptide: Mitochondrial import receptor subunit TOM40 homolog (301 aa).

The span at 1 to 19 (MATPTESELASPIPQTNPG) shows a compositional bias: polar residues. The segment at 1–20 (MATPTESELASPIPQTNPGS) is disordered.

The protein belongs to the Tom40 family. In terms of assembly, forms part of the preprotein translocase complex of the outer mitochondrial membrane (TOM complex). Interacts with mitochondrial targeting sequences. Ubiquitously expressed, but highly expressed in the pharyngeal muscles, the nerve ring, the intestine, gonadal sheath and in the tail hypodermis.

The protein resides in the mitochondrion outer membrane. Functionally, channel-forming protein essential for import of protein precursors into mitochondria. Specifically required for nnt-1 accumulation in the mitochondria and may be involved in the secretion of daf-28/insulin from the mitochondria. Required for embryonic and larval development. The polypeptide is Mitochondrial import receptor subunit TOM40 homolog (Caenorhabditis elegans).